Consider the following 351-residue polypeptide: tRNA uridine(34) hydroxylase (351 aa).

A Rhodanese domain is found at 146–240 (DDPQALFVDM…YARRAREQGL (95 aa)). The Cysteine persulfide intermediate role is filled by Cys200.

This sequence belongs to the TrhO family.

The enzyme catalyses uridine(34) in tRNA + AH2 + O2 = 5-hydroxyuridine(34) in tRNA + A + H2O. Functionally, catalyzes oxygen-dependent 5-hydroxyuridine (ho5U) modification at position 34 in tRNAs. This Sodalis glossinidius (strain morsitans) protein is tRNA uridine(34) hydroxylase.